We begin with the raw amino-acid sequence, 212 residues long: GTP-binding nuclear protein Ran (212 aa).

The Small GTPase Ran-type domain maps to 3–167 (EKEQIKLVLV…VWLTSKLLGN (165 aa)). 14-21 (DGGVGKTT) lines the GTP pocket. The switch-I stretch occupies residues 33–41 (PRYIPTLGV). GTP-binding positions include Gly64, 118 to 121 (NKVD), and 146 to 148 (SAK). Positions 64–80 (GQEKFGGLRDGYYIQGN) are switch-II.

The protein belongs to the small GTPase superfamily. Ran family. As to quaternary structure, found in a nuclear export complex with RanGTP, exportin and pre-miRNA.

It localises to the nucleus. In terms of biological role, GTP-binding protein involved in nucleocytoplasmic transport. Required for the import of protein into the nucleus and also for RNA export. Involved in chromatin condensation and control of cell cycle. In Dictyostelium discoideum (Social amoeba), this protein is GTP-binding nuclear protein Ran (ranA).